The chain runs to 200 residues: Inner membrane-spanning protein YciB (200 aa).

6 helical membrane-spanning segments follow: residues 1-21, 37-57, 66-86, 103-123, 136-156, and 167-187; these read MPPL…FFAN, IGAP…IALA, LPIM…LTLW, LFGG…GYVF, KLTL…EIVW, and FKVW…MPLI.

This sequence belongs to the YciB family.

The protein localises to the cell inner membrane. Plays a role in cell envelope biogenesis, maintenance of cell envelope integrity and membrane homeostasis. This is Inner membrane-spanning protein YciB from Brucella suis biovar 1 (strain 1330).